The primary structure comprises 326 residues: Cyclin-dependent kinase 6 (326 aa).

Met-1 carries the N-acetylmethionine modification. Tyr-13 and Tyr-24 each carry phosphotyrosine. The 288-residue stretch at 13–300 (YECVAEIGEG…AYSALSHPYF (288 aa)) folds into the Protein kinase domain. ATP is bound by residues 19–27 (IGEGAYGKV) and Lys-43. A phosphothreonine mark is found at Thr-49 and Thr-70. Asp-145 (proton acceptor) is an active-site residue. A Phosphothreonine modification is found at Thr-177. Lys-264 carries the N6-acetyllysine modification. Thr-325 bears the Phosphothreonine mark.

It belongs to the protein kinase superfamily. CMGC Ser/Thr protein kinase family. CDC2/CDKX subfamily. Interaction with D-type G1 cyclins. Cyclin binding promotes enzyme activation by phosphorylation at Thr-177. Binds to RUNX1, CDKN2D, FBXO7 and CDKN2C/p18-INK4c. Forms a cytoplasmic complex with Hsp90/HSP90AB1 and CDC37. FBXO7-binding promotes D-type cyclin binding. Interacts with Kaposi's sarcoma herpesvirus (KSHV) V-cyclin and herpesvirus saimiri (V-cyclin/ECLF2); the CDK6/V-cyclin complex phosphorylates NPM1 and thus lead to viral reactivation by reducing viral LANA levels. Post-translationally, thr-177 phosphorylation and Tyr-24 dephosphorylation promotes kinase activity. In terms of tissue distribution, expressed ubiquitously. Accumulates in squamous cell carcinomas, proliferating hematopoietic progenitor cells, beta-cells of pancreatic islets of Langerhans, and neuroblastomas. Reduced levels in differentiating cells.

Its subcellular location is the cytoplasm. The protein localises to the nucleus. It is found in the cell projection. It localises to the ruffle. The protein resides in the cytoskeleton. Its subcellular location is the microtubule organizing center. The protein localises to the centrosome. It carries out the reaction L-seryl-[protein] + ATP = O-phospho-L-seryl-[protein] + ADP + H(+). The catalysed reaction is L-threonyl-[protein] + ATP = O-phospho-L-threonyl-[protein] + ADP + H(+). Its activity is regulated as follows. Inhibited by INK4 proteins (CDKN2C/p18-INK4c), aminopurvalanol, PD0332991, 4-(Pyrazol-4-yl)-pyrimidines and fisetin, a flavonol inhibitor. Activated by Thr-177 phosphorylation and Tyr-24 dephosphorylation. Stimulated by cyclin from herpesvirus saimiri (V-cyclin/ECLF2). Rapidly down-regulated prior to cell differentiation (e.g. erythroid and osteoblast). In terms of biological role, serine/threonine-protein kinase involved in the control of the cell cycle and differentiation; promotes G1/S transition. Phosphorylates pRB/RB1 and NPM1. Interacts with D-type G1 cyclins during interphase at G1 to form a pRB/RB1 kinase and controls the entrance into the cell cycle. Involved in initiation and maintenance of cell cycle exit during cell differentiation; prevents cell proliferation and negatively regulates cell differentiation, but is required for the proliferation of specific cell types (e.g. erythroid and hematopoietic cells). Essential for cell proliferation within the dentate gyrus of the hippocampus and the subventricular zone of the lateral ventricles. Required during thymocyte development. Promotes the production of newborn neurons, probably by modulating G1 length. Promotes, at least in astrocytes, changes in patterns of gene expression, changes in the actin cytoskeleton including loss of stress fibers, and enhanced motility during cell differentiation. Prevents myeloid differentiation by interfering with RUNX1 and reducing its transcription transactivation activity, but promotes proliferation of normal myeloid progenitors. Delays senescence. Promotes the proliferation of beta-cells in pancreatic islets of Langerhans. May play a role in the centrosome organization during the cell cycle phases. This chain is Cyclin-dependent kinase 6 (CDK6), found in Homo sapiens (Human).